The sequence spans 302 residues: Quinolinate synthase (302 aa).

Residues His-24 and Ser-41 each coordinate iminosuccinate. Residue Cys-86 participates in [4Fe-4S] cluster binding. Iminosuccinate contacts are provided by residues 112-114 (YVN) and Ser-129. Cys-173 contacts [4Fe-4S] cluster. Iminosuccinate-binding positions include 199 to 201 (HPE) and Thr-216. Cys-259 is a [4Fe-4S] cluster binding site.

Belongs to the quinolinate synthase family. Type 2 subfamily. It depends on [4Fe-4S] cluster as a cofactor.

The protein resides in the cytoplasm. The enzyme catalyses iminosuccinate + dihydroxyacetone phosphate = quinolinate + phosphate + 2 H2O + H(+). Its pathway is cofactor biosynthesis; NAD(+) biosynthesis; quinolinate from iminoaspartate: step 1/1. Functionally, catalyzes the condensation of iminoaspartate with dihydroxyacetone phosphate to form quinolinate. This chain is Quinolinate synthase, found in Thermococcus kodakarensis (strain ATCC BAA-918 / JCM 12380 / KOD1) (Pyrococcus kodakaraensis (strain KOD1)).